The primary structure comprises 510 residues: NAD(P)H-quinone oxidoreductase subunit 2 A, chloroplastic (510 aa).

Helical transmembrane passes span 24–44, 57–77, 99–119, 124–144, 149–169, 183–203, 229–249, 295–315, 323–343, 354–374, 395–415, 418–438, and 484–504; these read LLLF…GLIL, TPWL…ALLF, IFQF…VEYI, MAIT…MFLC, LITI…LSGY, YLLM…WLYG, ISIA…PAPF, WHLL…LIAI, MLAY…IVGD, YMLF…LFGL, ALSS…AGFF, LYLF…IGLL, and MIVC…IIAI.

It belongs to the complex I subunit 2 family. As to quaternary structure, NDH is composed of at least 16 different subunits, 5 of which are encoded in the nucleus.

The protein resides in the plastid. It is found in the chloroplast thylakoid membrane. The catalysed reaction is a plastoquinone + NADH + (n+1) H(+)(in) = a plastoquinol + NAD(+) + n H(+)(out). The enzyme catalyses a plastoquinone + NADPH + (n+1) H(+)(in) = a plastoquinol + NADP(+) + n H(+)(out). Functionally, NDH shuttles electrons from NAD(P)H:plastoquinone, via FMN and iron-sulfur (Fe-S) centers, to quinones in the photosynthetic chain and possibly in a chloroplast respiratory chain. The immediate electron acceptor for the enzyme in this species is believed to be plastoquinone. Couples the redox reaction to proton translocation, and thus conserves the redox energy in a proton gradient. The polypeptide is NAD(P)H-quinone oxidoreductase subunit 2 A, chloroplastic (Nuphar advena (Common spatterdock)).